Reading from the N-terminus, the 371-residue chain is 4-hydroxy-3-methylbut-2-en-1-yl diphosphate synthase (flavodoxin) (371 aa).

Positions 270, 273, 305, and 312 each coordinate [4Fe-4S] cluster.

Belongs to the IspG family. [4Fe-4S] cluster is required as a cofactor.

It carries out the reaction (2E)-4-hydroxy-3-methylbut-2-enyl diphosphate + oxidized [flavodoxin] + H2O + 2 H(+) = 2-C-methyl-D-erythritol 2,4-cyclic diphosphate + reduced [flavodoxin]. It participates in isoprenoid biosynthesis; isopentenyl diphosphate biosynthesis via DXP pathway; isopentenyl diphosphate from 1-deoxy-D-xylulose 5-phosphate: step 5/6. In terms of biological role, converts 2C-methyl-D-erythritol 2,4-cyclodiphosphate (ME-2,4cPP) into 1-hydroxy-2-methyl-2-(E)-butenyl 4-diphosphate. The polypeptide is 4-hydroxy-3-methylbut-2-en-1-yl diphosphate synthase (flavodoxin) (Shewanella baltica (strain OS223)).